The sequence spans 35 residues: Mu-theraphotoxin-Hhn1a (35 aa).

3 cysteine pairs are disulfide-bonded: Cys2–Cys17, Cys9–Cys24, and Cys16–Cys31.

This sequence belongs to the neurotoxin 10 (Hwtx-1) family. 22 (Htx-4) subfamily. As to quaternary structure, monomer. As to expression, expressed by the venom gland.

It is found in the secreted. In terms of biological role, inhibits selectively tetrodotoxin-sensitive voltage-gated sodium channels (Nav). Does not act by binding to receptor site 3 to slow the inactivation kinetics of sodium currents. This Cyriopagopus hainanus (Chinese bird spider) protein is Mu-theraphotoxin-Hhn1a.